The following is a 101-amino-acid chain: Small ribosomal subunit protein bS18c (101 aa).

The segment covering 1-19 (MDKSKQPFHKTKRSFRRRL) has biased composition (basic residues). Residues 1–23 (MDKSKQPFHKTKRSFRRRLPPIG) form a disordered region.

The protein belongs to the bacterial ribosomal protein bS18 family. As to quaternary structure, part of the 30S ribosomal subunit.

Its subcellular location is the plastid. The protein localises to the chloroplast. This Lemna minor (Common duckweed) protein is Small ribosomal subunit protein bS18c.